The primary structure comprises 104 residues: Urease subunit beta (104 aa).

This sequence belongs to the urease beta subunit family. As to quaternary structure, heterotrimer of UreA (gamma), UreB (beta) and UreC (alpha) subunits. Three heterotrimers associate to form the active enzyme.

The protein resides in the cytoplasm. The enzyme catalyses urea + 2 H2O + H(+) = hydrogencarbonate + 2 NH4(+). The protein operates within nitrogen metabolism; urea degradation; CO(2) and NH(3) from urea (urease route): step 1/1. In Synechococcus sp. (strain RCC307), this protein is Urease subunit beta.